The sequence spans 271 residues: Putative phosphoenolpyruvate synthase regulatory protein (271 aa).

ADP is bound at residue 151–158 (GVSRSGKT).

Belongs to the pyruvate, phosphate/water dikinase regulatory protein family. PSRP subfamily.

It carries out the reaction [pyruvate, water dikinase] + ADP = [pyruvate, water dikinase]-phosphate + AMP + H(+). It catalyses the reaction [pyruvate, water dikinase]-phosphate + phosphate + H(+) = [pyruvate, water dikinase] + diphosphate. Bifunctional serine/threonine kinase and phosphorylase involved in the regulation of the phosphoenolpyruvate synthase (PEPS) by catalyzing its phosphorylation/dephosphorylation. The sequence is that of Putative phosphoenolpyruvate synthase regulatory protein from Burkholderia orbicola (strain MC0-3).